A 416-amino-acid polypeptide reads, in one-letter code: Tumor necrosis factor receptor superfamily member 16 (416 aa).

Residues 1 to 19 (MAGFVPLLLLLLPAGPTWG) form the signal peptide. TNFR-Cys repeat units lie at residues 23 to 57 (KCLT…TVCE), 58 to 99 (PCLD…DAVC), 100 to 138 (RCAY…DTVC), and 140 to 180 (ECPE…DAEC). Cystine bridges form between C24/C35, C36/C49, C39/C56, C59/C75, C78/C91, C81/C99, C101/C114, C117/C130, C120/C138, C141/C156, C159/C172, and C162/C180. Topologically, residues 29–239 (YTTSGECCKA…PVVSRGTADN (211 aa)) are extracellular. N52 carries an N-linked (GlcNAc...) asparagine glycan. A helical transmembrane segment spans residues 240–261 (LIPVYCSILAAVVVGLVAYIAF). At 262 to 416 (KRWNSCKQNK…YSESTATSPV (155 aa)) the chain is on the cytoplasmic side. Polar residues-rich tracts occupy residues 270–284 (NKQG…QTPS) and 294–315 (SGIS…STQG). The interval 270 to 328 (NKQGANNRPVNQTPSPEGEKLHSDSGISVDSQSLHDQQPPNQSTQGPAPKGDGSLYASL) is disordered. The 78-residue stretch at 333–410 (QEEVEKLLSS…DIAESLYSES (78 aa)) folds into the Death domain.

In terms of assembly, homodimer; disulfide-linked. Heterodimer with SORCS2. The extracellular domains of the heterodimer bind NGF. In terms of processing, N- and O-glycosylated. Post-translationally, phosphorylated on serine residues. Detected in embryonic dorsal root ganglion and retina.

The protein resides in the cell membrane. It localises to the perikaryon. It is found in the cell projection. The protein localises to the growth cone. Its subcellular location is the dendritic spine. Functionally, low affinity receptor which can bind to NGF, BDNF, NTF3, and NTF4. Forms a heterodimeric receptor with SORCS2 that binds the precursor forms of NGF, BDNF and NTF3 with high affinity, and has much lower affinity for mature NGF and BDNF. Plays an important role in differentiation and survival of specific neuronal populations during development. Can mediate cell survival as well as cell death of neural cells. Plays a role in the inactivation of RHOA. Necessary for the circadian oscillation of clock genes in the suprachiasmatic nucleus (SCmgetaN) of the brain and in liver and of the genes involved in glucose and lipid metabolism in the liver. This chain is Tumor necrosis factor receptor superfamily member 16 (NGFR), found in Gallus gallus (Chicken).